The chain runs to 123 residues: Ribosome-binding factor A (123 aa).

The protein belongs to the RbfA family. As to quaternary structure, monomer. Binds 30S ribosomal subunits, but not 50S ribosomal subunits or 70S ribosomes.

It is found in the cytoplasm. In terms of biological role, one of several proteins that assist in the late maturation steps of the functional core of the 30S ribosomal subunit. Associates with free 30S ribosomal subunits (but not with 30S subunits that are part of 70S ribosomes or polysomes). Required for efficient processing of 16S rRNA. May interact with the 5'-terminal helix region of 16S rRNA. This is Ribosome-binding factor A from Rickettsia bellii (strain OSU 85-389).